The primary structure comprises 569 residues: Urease subunit beta (569 aa).

The Urease domain occupies 131 to 569 (GGIDTHIHFI…VSLAQLFSIF (439 aa)). Residues His136, His138, and Lys219 each contribute to the Ni(2+) site. N6-carboxylysine is present on Lys219. His221 contributes to the substrate binding site. Residues His248 and His274 each coordinate Ni(2+). Residue His322 is the Proton donor of the active site. A Ni(2+)-binding site is contributed by Asp362.

The protein belongs to the metallo-dependent hydrolases superfamily. Urease alpha subunit family. Heterohexamer of 3 UreA (alpha) and 3 UreB (beta) subunits. It depends on Ni cation as a cofactor. In terms of processing, carboxylation allows a single lysine to coordinate two nickel ions.

Its subcellular location is the cytoplasm. The enzyme catalyses urea + 2 H2O + H(+) = hydrogencarbonate + 2 NH4(+). It functions in the pathway nitrogen metabolism; urea degradation; CO(2) and NH(3) from urea (urease route): step 1/1. This Helicobacter pylori (strain P12) protein is Urease subunit beta.